A 776-amino-acid chain; its full sequence is Protein SEY1 (776 aa).

The Cytoplasmic portion of the chain corresponds to 1 to 681 (MADRSAIQLI…KRSIITTRTH (681 aa)). The 230-residue stretch at 34 to 263 (GLDYHVISVF…TENYYFKPQY (230 aa)) folds into the GB1/RHD3-type G domain. A GTP-binding site is contributed by 44 to 51 (GSQSSGKS). Residues 682-702 (IPPWIYVLLAVLGWNEFVAVI) traverse the membrane as a helical segment. At 703 to 705 (RNP) the chain is on the lumenal side. Residues 706–726 (LFVTLTLILGATFFVIHKFGL) form a helical membrane-spanning segment. The Cytoplasmic segment spans residues 727–776 (WGPVVNVVQSAVGETRTAIKDKLRQFVVEDHEVKESFEMKDFSKNEQKEK).

The protein belongs to the TRAFAC class dynamin-like GTPase superfamily. GB1/RHD3 GTPase family. RHD3 subfamily. As to quaternary structure, interacts with RTN1 and YOP1; GTP binding is not required for these interactions.

The protein resides in the endoplasmic reticulum membrane. Its function is as follows. Cooperates with the reticulon proteins RTN1 and RTN2 and the tubule-shaping DP1 family protein YOP1 to generate and maintain the structure of the tubular endoplasmic reticulum network. Has GTPase activity, which is required for its function in ER organization. The polypeptide is Protein SEY1 (Saccharomyces cerevisiae (strain AWRI1631) (Baker's yeast)).